The sequence spans 133 residues: uncharacterized protein (133 aa).

A helical transmembrane segment spans residues 91-113 (LFATALISCIPSSFSALSFLATL).

It localises to the membrane. This is an uncharacterized protein from Saccharomyces cerevisiae (strain ATCC 204508 / S288c) (Baker's yeast).